Consider the following 198-residue polypeptide: GTP cyclohydrolase-2 (198 aa).

GTP is bound at residue 52–56; it reads RMHSE. The Zn(2+) site is built by Cys-57, Cys-68, and Cys-70. Residues Gln-73, 94–96, and Thr-116 each bind GTP; that span reads EGR. Asp-128 (proton acceptor) is an active-site residue. Arg-130 acts as the Nucleophile in catalysis. 2 residues coordinate GTP: Thr-151 and Lys-156.

This sequence belongs to the GTP cyclohydrolase II family. It depends on Zn(2+) as a cofactor.

The enzyme catalyses GTP + 4 H2O = 2,5-diamino-6-hydroxy-4-(5-phosphoribosylamino)-pyrimidine + formate + 2 phosphate + 3 H(+). Its pathway is cofactor biosynthesis; riboflavin biosynthesis; 5-amino-6-(D-ribitylamino)uracil from GTP: step 1/4. In terms of biological role, catalyzes the conversion of GTP to 2,5-diamino-6-ribosylamino-4(3H)-pyrimidinone 5'-phosphate (DARP), formate and pyrophosphate. In Vibrio vulnificus (strain CMCP6), this protein is GTP cyclohydrolase-2.